A 249-amino-acid chain; its full sequence is Cytokine-inducible SH2-containing protein (249 aa).

Residues 41–64 (AFPEEPAPTFAAPEPDGSAPQTRD) form a disordered region. Residues 84-165 (WYWGSITASE…PDVVSLIQHY (82 aa)) form the SH2 domain. Residues 200 to 248 (KLLRPLGRRDSIPSLQHLCRLRINRCTTEVERLPLPRRMGDYLKQYPFQ) enclose the SOCS box domain.

It participates in protein modification; protein ubiquitination. Functionally, SOCS family proteins form part of a classical negative feedback system that regulates cytokine signal transduction. CIS is involved in the negative regulation of cytokines that signal through the JAK-STAT5 pathway such as erythropoietin, prolactin and interleukin 3 (IL3) receptor. Inhibits STAT5 trans-activation by suppressing its tyrosine phosphorylation. May be a substrate-recognition component of a SCF-like ECS (Elongin BC-CUL2/5-SOCS-box protein) E3 ubiquitin-protein ligase complex which mediates the ubiquitination and subsequent proteasomal degradation of target proteins. The chain is Cytokine-inducible SH2-containing protein (CISH) from Gallus gallus (Chicken).